Consider the following 151-residue polypeptide: D-aminoacyl-tRNA deacylase (151 aa).

Residues 137–138 (GP) carry the Gly-cisPro motif, important for rejection of L-amino acids motif.

Belongs to the DTD family. As to quaternary structure, homodimer.

Its subcellular location is the cytoplasm. It catalyses the reaction glycyl-tRNA(Ala) + H2O = tRNA(Ala) + glycine + H(+). It carries out the reaction a D-aminoacyl-tRNA + H2O = a tRNA + a D-alpha-amino acid + H(+). In terms of biological role, an aminoacyl-tRNA editing enzyme that deacylates mischarged D-aminoacyl-tRNAs. Also deacylates mischarged glycyl-tRNA(Ala), protecting cells against glycine mischarging by AlaRS. Acts via tRNA-based rather than protein-based catalysis; rejects L-amino acids rather than detecting D-amino acids in the active site. By recycling D-aminoacyl-tRNA to D-amino acids and free tRNA molecules, this enzyme counteracts the toxicity associated with the formation of D-aminoacyl-tRNA entities in vivo and helps enforce protein L-homochirality. The chain is D-aminoacyl-tRNA deacylase from Solibacter usitatus (strain Ellin6076).